A 464-amino-acid chain; its full sequence is Soluble pyridine nucleotide transhydrogenase (464 aa).

35–44 (DSRRQVGGNC) is an FAD binding site.

This sequence belongs to the class-I pyridine nucleotide-disulfide oxidoreductase family. It depends on FAD as a cofactor.

Its subcellular location is the cytoplasm. The catalysed reaction is NAD(+) + NADPH = NADH + NADP(+). In terms of biological role, conversion of NADPH, generated by peripheral catabolic pathways, to NADH, which can enter the respiratory chain for energy generation. The protein is Soluble pyridine nucleotide transhydrogenase of Pseudomonas savastanoi pv. phaseolicola (strain 1448A / Race 6) (Pseudomonas syringae pv. phaseolicola (strain 1448A / Race 6)).